The sequence spans 187 residues: ATP synthase subunit b (187 aa).

The helical transmembrane segment at 36–53 (PYQWVSVAMLVLIAIMLW) threads the bilayer.

The protein belongs to the ATPase B chain family. In terms of assembly, F-type ATPases have 2 components, F(1) - the catalytic core - and F(0) - the membrane proton channel. F(1) has five subunits: alpha(3), beta(3), gamma(1), delta(1), epsilon(1). F(0) has four main subunits: a(1), b(2) and c(10-14). The alpha and beta chains form an alternating ring which encloses part of the gamma chain. F(1) is attached to F(0) by a central stalk formed by the gamma and epsilon chains, while a peripheral stalk is formed by the delta and b chains.

The protein localises to the cell inner membrane. In terms of biological role, f(1)F(0) ATP synthase produces ATP from ADP in the presence of a proton or sodium gradient. F-type ATPases consist of two structural domains, F(1) containing the extramembraneous catalytic core and F(0) containing the membrane proton channel, linked together by a central stalk and a peripheral stalk. During catalysis, ATP synthesis in the catalytic domain of F(1) is coupled via a rotary mechanism of the central stalk subunits to proton translocation. Component of the F(0) channel, it forms part of the peripheral stalk, linking F(1) to F(0). This is ATP synthase subunit b from Erythrobacter litoralis (strain HTCC2594).